A 258-amino-acid chain; its full sequence is Adenylate kinase (258 aa).

52–57 (GAGKGT) serves as a coordination point for ATP. Residues 72 to 101 (ATGDMLRSQVAKKTALGKEAKKIMDQGGLV) are NMP. Residues Thr-73, Arg-78, 99-101 (GLV), 128-131 (GFPR), and Gln-135 each bind AMP. Residues 169 to 206 (GRLVHPASGRSYHKIFNPPKEEMKDDVTGEPLIQRSDD) form an LID region. ATP is bound by residues Arg-170 and 179 to 180 (SY). Positions 203 and 214 each coordinate AMP. Gln-242 is an ATP binding site.

It belongs to the adenylate kinase family. AK2 subfamily. In terms of assembly, monomer.

Its subcellular location is the cytoplasm. The protein resides in the cytosol. The protein localises to the mitochondrion intermembrane space. The catalysed reaction is AMP + ATP = 2 ADP. Catalyzes the reversible transfer of the terminal phosphate group between ATP and AMP. Plays an important role in cellular energy homeostasis and in adenine nucleotide metabolism. Adenylate kinase activity is critical for regulation of the phosphate utilization and the AMP de novo biosynthesis pathways. In Aspergillus niger (strain ATCC MYA-4892 / CBS 513.88 / FGSC A1513), this protein is Adenylate kinase (adk1).